The sequence spans 305 residues: 2-aminophenol 1,6-dioxygenase beta subunit (305 aa).

Positions 14, 63, and 196 each coordinate Fe cation.

Belongs to the LigB/MhpB extradiol dioxygenase family. Heterotetramer of 2 alpha and 2 beta subunits. Fe(2+) serves as cofactor.

It catalyses the reaction 2-aminophenol + O2 = 2-aminomuconate 6-semialdehyde. Strongly inhibited by CuSO(4), FeCl(3), K(3)[Fe(CN)(6)], AgNO3, HgCl(2) and MnCl(2). In terms of biological role, component of the 2-aminophenol 1,6-dioxygenase complex that catalyzes the ring fission of 2-aminophenol to produce 2-aminomuconic 6-semialdehyde. AmnB seems to be the catalytic subunit of the complex. The enzyme is also active toward 2-amino-p-cresol, 6-amino-m-cresol, 2-amino-m-cresol, 2-amino-4,5-dimethylphenol, 2-amino-4-chlorophenol, and catechol. In Pseudomonas sp, this protein is 2-aminophenol 1,6-dioxygenase beta subunit (amnB).